The primary structure comprises 321 residues: Lipoyl synthase (321 aa).

7 residues coordinate [4Fe-4S] cluster: Cys68, Cys73, Cys79, Cys94, Cys98, Cys101, and Ser308. The 218-residue stretch at 80-297 folds into the Radical SAM core domain; the sequence is FNHGTATFMI…KAEALAMGFT (218 aa).

It belongs to the radical SAM superfamily. Lipoyl synthase family. The cofactor is [4Fe-4S] cluster.

It localises to the cytoplasm. The catalysed reaction is [[Fe-S] cluster scaffold protein carrying a second [4Fe-4S](2+) cluster] + N(6)-octanoyl-L-lysyl-[protein] + 2 oxidized [2Fe-2S]-[ferredoxin] + 2 S-adenosyl-L-methionine + 4 H(+) = [[Fe-S] cluster scaffold protein] + N(6)-[(R)-dihydrolipoyl]-L-lysyl-[protein] + 4 Fe(3+) + 2 hydrogen sulfide + 2 5'-deoxyadenosine + 2 L-methionine + 2 reduced [2Fe-2S]-[ferredoxin]. It functions in the pathway protein modification; protein lipoylation via endogenous pathway; protein N(6)-(lipoyl)lysine from octanoyl-[acyl-carrier-protein]: step 2/2. Catalyzes the radical-mediated insertion of two sulfur atoms into the C-6 and C-8 positions of the octanoyl moiety bound to the lipoyl domains of lipoate-dependent enzymes, thereby converting the octanoylated domains into lipoylated derivatives. The polypeptide is Lipoyl synthase (Edwardsiella ictaluri (strain 93-146)).